The chain runs to 712 residues: MREPALAASAMAYHPFHAPRPADFPMSAFLAAAQPSFFPALALPPGALAKPLPDPGLAGAAAAAAAAAAAAEAGLHVSALGPHPPAAHLRSLKSLEPEDEVEDDPKVTLEAKELWDQFHKLGTEMVITKSGRRMFPPFKVRVSGLDKKAKYILLMDIVAADDCRYKFHNSRWMVAGKADPEMPKRMYIHPDSPATGEQWMAKPVAFHKLKLTNNISDKHGFTILNSMHKYQPRFHIVRANDILKLPYSTFRTYVFPETDFIAVTAYQNDKITQLKIDNNPFAKGFRDTGNGRREKRKQLTLPSLRLYEEHCKPERDGAESDASSCDPPPAREPPTSPGAAPSPLRLHRARAEEKSCAADSDPEPERLSEERAGAPLGRSPAPDSASPTRLTEPERARERRSPERGKEPAESGGDGPFGLRSLEKERAEARRKDEGRKEAAEGKEQGLAPLVVQTDSASPLGAGHLPGLAFSSHLHGQQFFGPLGAGQPLFLHPGQFTMGPGAFSAMGMGHLLASVAGGGNGGGGGPGTAAGLDAGGLGPAASAASTAAPFPFHLSQHMLASQGIPMPTFGGLFPYPYTYMAAAAAAASALPATSAAAAAAAAAGSLSRSPFLGSARPRLRFSPYQIPVTIPPSTSLLTTGLASEGSKAAGGNSREPSPLPELALRKVGAPSRGALSPSGSAKEAANELQSIQRLVSGLESQRALSPGRESPK.

The segment at residues 109–287 (LEAKELWDQF…NNPFAKGFRD (179 aa)) is a DNA-binding region (T-box). Residues 313-450 (PERDGAESDA…EGKEQGLAPL (138 aa)) are disordered. Residues 326-336 (DPPPAREPPTS) show a composition bias toward pro residues. 3 positions are modified to phosphoserine: Ser-336, Ser-342, and Ser-360. Composition is skewed to basic and acidic residues over residues 363–372 (EPERLSEERA), 391–409 (TEPERARERRSPERGKEPA), and 421–444 (SLEKERAEARRKDEGRKEAAEGKE). The interval 518 to 601 (GGNGGGGGPG…ATSAAAAAAA (84 aa)) is repression domain 1 (RD1). 4 positions are modified to phosphoserine: Ser-622, Ser-653, Ser-657, and Ser-676. Residues 637–687 (LTTGLASEGSKAAGGNSREPSPLPELALRKVGAPSRGALSPSGSAKEAANE) form a disordered region.

As to quaternary structure, binds DNA as a monomer. Interacts with PML (isoform PML-2, isoform PML-3 and isoform PML-4). Expressed primarily in adult in kidney, lung, and placenta. Weak expression in heart and ovary.

The protein localises to the nucleus. Functionally, transcription factor which acts as a transcriptional repressor. May also function as a transcriptional activator. Binds to the palindromic T site 5'-TTCACACCTAGGTGTGAA-3' DNA sequence, or a half-site, which are present in the regulatory region of several genes. Required for cardiac atrioventricular canal formation. May cooperate with NKX2.5 to negatively modulate expression of NPPA/ANF in the atrioventricular canal. May play a role as a positive regulator of TGFB2 expression, perhaps acting in concert with GATA4 in the developing outflow tract myocardium. Plays a role in limb pattern formation. Acts as a transcriptional repressor of ADAM10 gene expression, perhaps in concert with histone deacetylase HDAC1 as cofactor. Involved in branching morphogenesis in both developing lungs and adult mammary glands, via negative modulation of target genes; acting redundantly with TBX3. Required, together with TBX3, to maintain cell proliferation in the embryonic lung mesenchyme; perhaps acting downstream of SHH, BMP and TGFbeta signaling. Involved in modulating early inner ear development, acting independently of, and also redundantly with TBX3, in different subregions of the developing ear. Acts as a negative regulator of PML function in cellular senescence. Acts as a negative regulator of expression of CDKN1A/p21, IL33 and CCN4; repression of CDKN1A is enhanced in response to UV-induced stress, perhaps as a result of phosphorylation by p38 MAPK. Negatively modulates expression of CDKN2A/p14ARF and CDH1/E-cadherin. Plays a role in induction of the epithelial-mesenchymal transition (EMT). Plays a role in melanocyte proliferation, perhaps via regulation of cyclin CCND1. Involved in melanogenesis, acting via negative modulation of expression of DHICA oxidase/TYRP1 and P protein/OCA2. Involved in regulating retinal pigment epithelium (RPE) cell proliferation, perhaps via negatively modulating transcription of the transcription factor CEBPD. The protein is T-box transcription factor TBX2 (TBX2) of Homo sapiens (Human).